Reading from the N-terminus, the 190-residue chain is Secretory phospholipase A2 (190 aa).

The signal sequence occupies residues 1–15 (MKLAYFSSLLPLALA). C62 and C78 form a disulfide bridge. A Ca(2+)-binding site is contributed by A65. H81 is a catalytic residue. D82 serves as a coordination point for Ca(2+).

It belongs to the phospholipase A2 family. Ca(2+) serves as cofactor.

It is found in the lipid droplet. It localises to the secreted. The enzyme catalyses a 1,2-diacyl-sn-glycero-3-phosphocholine + H2O = a 1-acyl-sn-glycero-3-phosphocholine + a fatty acid + H(+). Functionally, secretory phospholipase that catalyzes the calcium-dependent hydrolysis of the 2-acyl groups in 3-sn-phosphoglycerides. Increases the ability to utilize insect-derived nutrients and lipids, and promotes lipid dropplets accumulation. Plays a role in virulence, including more efficient penetration of the insect cuticle and evasion of host immune response by repressing the expression of host immunity genes. The polypeptide is Secretory phospholipase A2 (Beauveria bassiana (strain ARSEF 2860) (White muscardine disease fungus)).